The chain runs to 398 residues: Phosphoglycerate kinase (398 aa).

Substrate is bound by residues 21–23, arginine 36, 59–62, arginine 119, and arginine 157; these read DFN and HLGR. ATP contacts are provided by residues lysine 208, glycine 296, glutamate 327, and 354 to 357; that span reads GGDS.

It belongs to the phosphoglycerate kinase family. In terms of assembly, monomer.

It localises to the cytoplasm. It catalyses the reaction (2R)-3-phosphoglycerate + ATP = (2R)-3-phospho-glyceroyl phosphate + ADP. It functions in the pathway carbohydrate degradation; glycolysis; pyruvate from D-glyceraldehyde 3-phosphate: step 2/5. This Streptococcus mutans serotype c (strain ATCC 700610 / UA159) protein is Phosphoglycerate kinase.